Here is a 415-residue protein sequence, read N- to C-terminus: Dibenzothiophene monooxygenase (415 aa).

FMN is bound by residues tyrosine 94, 127–132 (NASSEN), 157–161 (KHFSS), arginine 280, 365–366 (IG), and threonine 387. Residues 129 to 140 (SSENNSHILDWK) form a lid loop region.

The protein belongs to the DszC flavin monooxygenase family. As to quaternary structure, homotetramer.

The protein resides in the cytoplasm. It carries out the reaction dibenzothiophene + 2 FMNH2 + 2 O2 = dibenzothiophene 5,5-dioxide + 2 FMN + 2 H2O + 2 H(+). It catalyses the reaction dibenzothiophene + FMNH2 + O2 = dibenzothiophene 5-oxide + FMN + H2O + H(+). The enzyme catalyses dibenzothiophene 5-oxide + FMNH2 + O2 = dibenzothiophene 5,5-dioxide + FMN + H2O + H(+). It functions in the pathway sulfur metabolism; dibenzothiophene degradation. Its activity is regulated as follows. Inhibited at high concentrations of FMN or FAD. In terms of biological role, catalyzes the first step of the '4S' desulfurization pathway that removes covalently bound sulfur from dibenzothiophene (DBT) without breaking carbon-carbon bonds. Sulfur dioxygenase which converts DBT to DBT-sulfone (DBTO2 or DBT 5,5-dioxide) probably in a stepwise manner. In addition to FMNH2 can also use FAD (although FAD is less efficient). The chain is Dibenzothiophene monooxygenase from Mycolicibacterium goodii (Mycobacterium goodii).